Reading from the N-terminus, the 409-residue chain is Glycosyltransferase GtfC (409 aa).

Belongs to the glycosyltransferase 28 family.

It carries out the reaction dTDP-beta-L-vancosamine + devancoaminyl-vancomycin = epivancomycin + dTDP + H(+). The catalysed reaction is chloroorienticin B + dTDP-beta-L-vancosamine = chloroeremomycin + dTDP + H(+). The protein operates within antibiotic biosynthesis; vancomycin biosynthesis. Its function is as follows. Catalyzes the attachment of dTDP-L-4-epi-vancosamine to chloroorienticin B to form chloroeremomycin in the biosynthesis of glycopeptide antibiotic chloroeremomycin, a member of the vancomycin group of antibiotics. Also able to use dTDP-L-4-epi-vancosamine and devancoaminyl-vancomycin (DVV) to create epivancomycin. Acts downstream of GtfA. This chain is Glycosyltransferase GtfC (gtfC), found in Amycolatopsis orientalis (Nocardia orientalis).